The primary structure comprises 212 residues: Thymidylate kinase (212 aa).

ATP is bound at residue 10-17; sequence GLDGAGKT.

Belongs to the thymidylate kinase family.

It carries out the reaction dTMP + ATP = dTDP + ADP. Functionally, phosphorylation of dTMP to form dTDP in both de novo and salvage pathways of dTTP synthesis. This is Thymidylate kinase from Blochmanniella pennsylvanica (strain BPEN).